Reading from the N-terminus, the 101-residue chain is Small ribosomal subunit protein uS14 (101 aa).

It belongs to the universal ribosomal protein uS14 family. In terms of assembly, part of the 30S ribosomal subunit. Contacts proteins S3 and S10.

Functionally, binds 16S rRNA, required for the assembly of 30S particles and may also be responsible for determining the conformation of the 16S rRNA at the A site. This Shewanella piezotolerans (strain WP3 / JCM 13877) protein is Small ribosomal subunit protein uS14.